We begin with the raw amino-acid sequence, 634 residues long: UPF0329 protein ECU11_2090 (634 aa).

Basic and acidic residues-rich tracts occupy residues 354-365 (REEREKREESKG) and 397-407 (GESKEEDRGEE). The disordered stretch occupies residues 354–438 (REEREKREES…KGSGEKRISE (85 aa)). The segment covering 408-417 (GGVEAEDPLE) has biased composition (acidic residues).

The protein belongs to the UPF0329 family.

The sequence is that of UPF0329 protein ECU11_2090 from Encephalitozoon cuniculi (strain GB-M1) (Microsporidian parasite).